We begin with the raw amino-acid sequence, 552 residues long: Esterase E4 (552 aa).

The signal sequence occupies residues 1-23; the sequence is MKNTCGILLNLFLFIGCFLTCSA. N-linked (GlcNAc...) asparagine glycosylation occurs at Asn81. A disulfide bridge links Cys89 with Cys106. The active-site Acyl-ester intermediate is Ser214. An intrachain disulfide couples Cys266 to Cys277. Asn269 carries N-linked (GlcNAc...) asparagine glycosylation. The active-site Charge relay system is Glu339. N-linked (GlcNAc...) asparagine glycans are attached at residues Asn371, Asn404, and Asn443. His463 (charge relay system) is an active-site residue.

This sequence belongs to the type-B carboxylesterase/lipase family.

The enzyme catalyses a carboxylic ester + H2O = an alcohol + a carboxylate + H(+). Its function is as follows. Overproduction of nonspecific esterases is a common mechanism of resistance to organophosphate insecticides. In Myzus persicae (Green peach aphid), this protein is Esterase E4.